The sequence spans 421 residues: F-box only protein 9 (421 aa).

The interval 1–63 (MAESNQNTDG…AELRRRQETA (63 aa)) is disordered. A compositionally biased stretch (acidic residues) spans 11–20 (AVEEGEDENT). Residues 40 to 52 (LQPSSGGQRSFSR) are compositionally biased toward polar residues. Over residues 54–63 (AELRRRQETA) the composition is skewed to basic and acidic residues. A TPR repeat occupies 68 to 101 (ARELFLKAVEEEQNGAVYEAIKYYKSAMQLVPDI). In terms of domain architecture, F-box spans 158–209 (QVHISALPFEVLMYIFRWVVSCDLDLRALEQLSLVCRGFYICARDPEIWRSA).

As to quaternary structure, part of the SCF (SKP1-CUL1-F-box) E3 ubiquitin-protein ligase complex SCF(fbxo9).

The protein resides in the cytoplasm. It functions in the pathway protein modification; protein ubiquitination. Its function is as follows. Substrate recognition component of a SCF (SKP1-CUL1-F-box protein) E3 ubiquitin-protein ligase complex which mediates the ubiquitination and subsequent proteasomal degradation of target proteins and acts as a regulator of mTOR signaling. The protein is F-box only protein 9 (fbxo9) of Danio rerio (Zebrafish).